We begin with the raw amino-acid sequence, 166 residues long: Interferon gamma (166 aa).

The signal sequence occupies residues methionine 1–cysteine 23. At glutamine 24 the chain carries Pyrrolidone carboxylic acid. Asparagine 48 is a glycosylation site (N-linked (GlcNAc...) asparagine). Asparagine 120 carries N-linked (GlcNAc...) asparagine; in dimeric form glycosylation. Residues alanine 147–glutamine 166 form a disordered region. The span at threonine 149–glutamine 166 shows a compositional bias: basic residues. Positions arginine 162–glutamine 166 are excised as a propeptide.

Belongs to the type II (or gamma) interferon family. In terms of assembly, homodimer. Interacts with IFNGR1 (via extracellular domain); this interaction promotes IFNGR1 dimerization. In terms of processing, proteolytic processing produces C-terminal heterogeneity, with proteins ending alternatively at Gly-150, Met-157 or Gly-161. In terms of tissue distribution, released primarily from activated T lymphocytes.

It is found in the secreted. Its function is as follows. Type II interferon produced by immune cells such as T-cells and NK cells that plays crucial roles in antimicrobial, antiviral, and antitumor responses by activating effector immune cells and enhancing antigen presentation. Primarily signals through the JAK-STAT pathway after interaction with its receptor IFNGR1 to affect gene regulation. Upon IFNG binding, IFNGR1 intracellular domain opens out to allow association of downstream signaling components JAK2, JAK1 and STAT1, leading to STAT1 activation, nuclear translocation and transcription of IFNG-regulated genes. Many of the induced genes are transcription factors such as IRF1 that are able to further drive regulation of a next wave of transcription. Plays a role in class I antigen presentation pathway by inducing a replacement of catalytic proteasome subunits with immunoproteasome subunits. In turn, increases the quantity, quality, and repertoire of peptides for class I MHC loading. Increases the efficiency of peptide generation also by inducing the expression of activator PA28 that associates with the proteasome and alters its proteolytic cleavage preference. Up-regulates as well MHC II complexes on the cell surface by promoting expression of several key molecules such as cathepsins B/CTSB, H/CTSH, and L/CTSL. Participates in the regulation of hematopoietic stem cells during development and under homeostatic conditions by affecting their development, quiescence, and differentiation. The chain is Interferon gamma (IFNG) from Homo sapiens (Human).